The sequence spans 77 residues: Defensin-like protein (77 aa).

An N-terminal signal peptide occupies residues 1–30; the sequence is MERGMRLFSSLVLVLLLVTATEMGPKVAEA. 4 cysteine pairs are disulfide-bonded: cysteine 33-cysteine 77, cysteine 44-cysteine 64, cysteine 50-cysteine 71, and cysteine 54-cysteine 73.

Belongs to the DEFL family.

The protein resides in the secreted. The sequence is that of Defensin-like protein from Nelumbo nucifera (Sacred lotus).